The primary structure comprises 89 residues: Small ribosomal subunit protein uS15 (89 aa).

It belongs to the universal ribosomal protein uS15 family. In terms of assembly, part of the 30S ribosomal subunit. Forms a bridge to the 50S subunit in the 70S ribosome, contacting the 23S rRNA.

Its function is as follows. One of the primary rRNA binding proteins, it binds directly to 16S rRNA where it helps nucleate assembly of the platform of the 30S subunit by binding and bridging several RNA helices of the 16S rRNA. Functionally, forms an intersubunit bridge (bridge B4) with the 23S rRNA of the 50S subunit in the ribosome. This chain is Small ribosomal subunit protein uS15, found in Crocosphaera subtropica (strain ATCC 51142 / BH68) (Cyanothece sp. (strain ATCC 51142)).